Here is a 1141-residue protein sequence, read N- to C-terminus: Collagen alpha-1(XXVIII) chain (1141 aa).

Residues 1 to 20 form the signal peptide; it reads MRRRDVAFCLLLLPAFMTQA. Positions 48–227 constitute a VWFA 1 domain; the sequence is DVVFILDSSE…TLVDRIQERL (180 aa). Residues 242-770 are disordered; that stretch reads CEKGEPGDPG…KQGLQGPKGD (529 aa). Collagen-like domains are found at residues 243–300, 301–358, 501–544, 545–588, and 733–769; these read EKGE…RGEC, GKPG…GAPG, GPKG…MPGK, GQPG…MPGA, and GQKG…GPKG. Basic and acidic residues predominate over residues 291–311; it reads KGDKGERGECGKPGMKGDKGP. Residues 335–344 show a composition bias toward low complexity; the sequence is PKGFQGNKGE. Residues 345-356 show a composition bias toward pro residues; sequence PGPPGPYGPPGA. Residues 735–753 show a composition bias toward basic and acidic residues; the sequence is KGEHGDRGDVGRKGEKGET. The VWFA 2 domain maps to 798-976; it reads ELVFVIDSSE…TLQDTLKQKL (179 aa). One can recognise a BPTI/Kunitz inhibitor domain in the interval 1088-1138; that stretch reads CEEALKPGECGDYVVRWYYDKQVNSCARFWFSGCNGSGNRFHSEKECRETC. 3 cysteine pairs are disulfide-bonded: cysteine 1088–cysteine 1138, cysteine 1097–cysteine 1121, and cysteine 1113–cysteine 1134.

It belongs to the VWA-containing collagen family. As to quaternary structure, trimer or homomer. Secreted into as a 135 kDa monomer under reducing conditions and as a homotrimer under non-reducing conditions. As to expression, expressed in skin, intestine, sternum, brain and kidney. Lower expression is also observed in heart, lung, sciatic nerve, dorsal root ganglia, peripheral nerves and calvaria of newborn mice and in intestine and brain of adult mice. Found in basement membrane surrounding a particular subset of Schwann cells in adult sciatic nerve.

Its subcellular location is the secreted. The protein localises to the extracellular space. The protein resides in the extracellular matrix. It localises to the basement membrane. In terms of biological role, may act as a cell-binding protein. This is Collagen alpha-1(XXVIII) chain (Col28a1) from Mus musculus (Mouse).